Reading from the N-terminus, the 571-residue chain is Proline--tRNA ligase (571 aa).

This sequence belongs to the class-II aminoacyl-tRNA synthetase family. ProS type 1 subfamily. Homodimer.

The protein resides in the cytoplasm. It catalyses the reaction tRNA(Pro) + L-proline + ATP = L-prolyl-tRNA(Pro) + AMP + diphosphate. Catalyzes the attachment of proline to tRNA(Pro) in a two-step reaction: proline is first activated by ATP to form Pro-AMP and then transferred to the acceptor end of tRNA(Pro). As ProRS can inadvertently accommodate and process non-cognate amino acids such as alanine and cysteine, to avoid such errors it has two additional distinct editing activities against alanine. One activity is designated as 'pretransfer' editing and involves the tRNA(Pro)-independent hydrolysis of activated Ala-AMP. The other activity is designated 'posttransfer' editing and involves deacylation of mischarged Ala-tRNA(Pro). The misacylated Cys-tRNA(Pro) is not edited by ProRS. This chain is Proline--tRNA ligase, found in Pseudomonas putida (strain ATCC 47054 / DSM 6125 / CFBP 8728 / NCIMB 11950 / KT2440).